Reading from the N-terminus, the 324-residue chain is IDS-like terpene synthase 3 (324 aa).

The Mg(2+) site is built by Asp77 and Asp81.

The protein belongs to the FPP/GGPP synthase family. The cofactor is Mg(2+).

The enzyme catalyses (2E)-geranyl diphosphate + H2O = linalool + diphosphate. The catalysed reaction is (2E,6E)-farnesyl diphosphate + H2O = (6E)-nerolidol + diphosphate. Terpene synthase that shows monoterpene synthase activity and produces linalool, using geranyl diphosphate (GPP) as substrate. Also shows sesquiterpene synthase activity as it is able to convert farnesyl diphosphate (FPP) into (E)-nerolidol. The polypeptide is IDS-like terpene synthase 3 (Melampsora lini (Rust fungus)).